The following is a 263-amino-acid chain: Putative cysteine-rich repeat secretory protein 31 (263 aa).

Positions 1 to 32 (MHNSYSLSKRLVLVLFLAVVATQLFLIRNVSS) are cleaved as a signal peptide. Gnk2-homologous domains follow at residues 39–141 (YLHH…AIEV) and 146–260 (YDNN…FYPF).

The protein belongs to the cysteine-rich repeat secretory protein family.

The protein resides in the secreted. The polypeptide is Putative cysteine-rich repeat secretory protein 31 (CRRSP31) (Arabidopsis thaliana (Mouse-ear cress)).